The sequence spans 302 residues: Large ribosomal subunit protein uL29m (302 aa).

Belongs to the universal ribosomal protein uL29 family. In terms of assembly, component of the mitochondrial large ribosomal subunit. Mature mitochondrial ribosomes consist of a small (37S) and a large (54S) subunit. The 37S subunit contains at least 33 different proteins and 1 molecule of RNA (15S). The 54S subunit contains at least 45 different proteins and 1 molecule of RNA (21S).

Its subcellular location is the mitochondrion. The chain is Large ribosomal subunit protein uL29m (MRPL4) from Debaryomyces hansenii (strain ATCC 36239 / CBS 767 / BCRC 21394 / JCM 1990 / NBRC 0083 / IGC 2968) (Yeast).